The sequence spans 131 residues: S-adenosylmethionine decarboxylase proenzyme (131 aa).

Ser64 serves as the catalytic Schiff-base intermediate with substrate; via pyruvic acid. Ser64 carries the post-translational modification Pyruvic acid (Ser); by autocatalysis. The active-site Proton acceptor; for processing activity is the His69. Cys84 functions as the Proton donor; for catalytic activity in the catalytic mechanism.

It belongs to the prokaryotic AdoMetDC family. Type 1 subfamily. In terms of assembly, heterotetramer of two alpha and two beta chains arranged as a dimer of alpha/beta heterodimers. Requires pyruvate as cofactor. Post-translationally, is synthesized initially as an inactive proenzyme. Formation of the active enzyme involves a self-maturation process in which the active site pyruvoyl group is generated from an internal serine residue via an autocatalytic post-translational modification. Two non-identical subunits are generated from the proenzyme in this reaction, and the pyruvate is formed at the N-terminus of the alpha chain, which is derived from the carboxyl end of the proenzyme. The post-translation cleavage follows an unusual pathway, termed non-hydrolytic serinolysis, in which the side chain hydroxyl group of the serine supplies its oxygen atom to form the C-terminus of the beta chain, while the remainder of the serine residue undergoes an oxidative deamination to produce ammonia and the pyruvoyl group blocking the N-terminus of the alpha chain.

The enzyme catalyses S-adenosyl-L-methionine + H(+) = S-adenosyl 3-(methylsulfanyl)propylamine + CO2. It functions in the pathway amine and polyamine biosynthesis; S-adenosylmethioninamine biosynthesis; S-adenosylmethioninamine from S-adenosyl-L-methionine: step 1/1. Functionally, catalyzes the decarboxylation of S-adenosylmethionine to S-adenosylmethioninamine (dcAdoMet), the propylamine donor required for the synthesis of the polyamines spermine and spermidine from the diamine putrescine. The protein is S-adenosylmethionine decarboxylase proenzyme of Thermoplasma acidophilum (strain ATCC 25905 / DSM 1728 / JCM 9062 / NBRC 15155 / AMRC-C165).